We begin with the raw amino-acid sequence, 430 residues long: Serine--tRNA ligase (430 aa).

Positions 47–66 (AQAEQNKASKEAGAAKGRGD) are disordered. 231–233 (TSE) is a binding site for L-serine. 262-264 (RSE) lines the ATP pocket. E285 lines the L-serine pocket. 349-352 (EISS) provides a ligand contact to ATP. S385 lines the L-serine pocket.

It belongs to the class-II aminoacyl-tRNA synthetase family. Type-1 seryl-tRNA synthetase subfamily. As to quaternary structure, homodimer. The tRNA molecule binds across the dimer.

It is found in the cytoplasm. The catalysed reaction is tRNA(Ser) + L-serine + ATP = L-seryl-tRNA(Ser) + AMP + diphosphate + H(+). The enzyme catalyses tRNA(Sec) + L-serine + ATP = L-seryl-tRNA(Sec) + AMP + diphosphate + H(+). Its pathway is aminoacyl-tRNA biosynthesis; selenocysteinyl-tRNA(Sec) biosynthesis; L-seryl-tRNA(Sec) from L-serine and tRNA(Sec): step 1/1. In terms of biological role, catalyzes the attachment of serine to tRNA(Ser). Is also able to aminoacylate tRNA(Sec) with serine, to form the misacylated tRNA L-seryl-tRNA(Sec), which will be further converted into selenocysteinyl-tRNA(Sec). This Paracoccus denitrificans (strain Pd 1222) protein is Serine--tRNA ligase.